The chain runs to 185 residues: PXMP2/4 family protein 4 (185 aa).

Transmembrane regions (helical) follow at residues Met63–Asp83, Ile100–Leu120, and Val141–Ile161.

This sequence belongs to the peroxisomal membrane protein PXMP2/4 family.

Its subcellular location is the membrane. The sequence is that of PXMP2/4 family protein 4 from Dictyostelium discoideum (Social amoeba).